Reading from the N-terminus, the 368-residue chain is tRNA(Met) cytidine acetate ligase (368 aa).

ATP-binding positions include 7-20 (IAEFNPFHNGHKYL), glycine 96, asparagine 152, and arginine 175.

This sequence belongs to the TmcAL family.

The protein resides in the cytoplasm. It carries out the reaction cytidine(34) in elongator tRNA(Met) + acetate + ATP = N(4)-acetylcytidine(34) in elongator tRNA(Met) + AMP + diphosphate. Catalyzes the formation of N(4)-acetylcytidine (ac(4)C) at the wobble position of elongator tRNA(Met), using acetate and ATP as substrates. First activates an acetate ion to form acetyladenylate (Ac-AMP) and then transfers the acetyl group to tRNA to form ac(4)C34. This is tRNA(Met) cytidine acetate ligase from Streptococcus pyogenes serotype M49 (strain NZ131).